The primary structure comprises 305 residues: MDPVLGLGLFAFALLLLALPLAFWKVSSEKTSGLVTLLIATANLALTAQLVLRWWQSGHFPISNLYESLCFLAWACTLTQLLVERSWPTPIVAAAATPMGLGCIAFASFALPDQLQEASPLVPALRSSWLVMHVSVIMVSYAALLVGSLLSVAVLVTDRGHALELRSSSIGSGGYRRAALATPLGNVGDSEVQLSSVKFTRNELLDSLSYRTITVGFLLLTVGIISGAVWANEAWGSYWSWDPKETWALICWLVYAAYLHTRLSRGWQGRRPALVASAGLVVIGVCYIGVNLLGIGLHSYGWFFG.

8 consecutive transmembrane segments (helical) span residues 4–24 (VLGLGLFAFALLLLALPLAFW), 32–52 (SGLVTLLIATANLALTAQLVL), 58–78 (GHFPISNLYESLCFLAWACTL), 91–111 (IVAAAATPMGLGCIAFASFAL), 136–156 (VIMVSYAALLVGSLLSVAVLV), 212–232 (TITVGFLLLTVGIISGAVWAN), 246–263 (TWALICWLVYAAYLHTRL), and 275–295 (VASAGLVVIGVCYIGVNLLGI).

Belongs to the CcmF/CycK/Ccl1/NrfE/CcsA family. May interact with ccs1.

The protein localises to the cellular thylakoid membrane. Required during biogenesis of c-type cytochromes (cytochrome c6 and cytochrome f) at the step of heme attachment. The chain is Cytochrome c biogenesis protein CcsA from Synechococcus sp. (strain CC9311).